Consider the following 682-residue polypeptide: Potassium-transporting ATPase ATP-binding subunit (682 aa).

Transmembrane regions (helical) follow at residues 34-54 (PVMF…LAMV), 58-78 (IAGS…TVLF), 219-239 (IALT…TATL), and 254-274 (VLVA…LSAI). Residue aspartate 307 is the 4-aspartylphosphate intermediate of the active site. ATP is bound by residues aspartate 344, glutamate 348, 377-384 (FTAQSRMS), and lysine 395. Residues aspartate 518 and aspartate 522 each coordinate Mg(2+). A run of 3 helical transmembrane segments spans residues 588–608 (FAII…LNVM), 616–636 (AILS…PLAL), and 662–682 (LVVP…LGLA).

It belongs to the cation transport ATPase (P-type) (TC 3.A.3) family. Type IA subfamily. The system is composed of three essential subunits: KdpA, KdpB and KdpC.

The protein resides in the cell inner membrane. The enzyme catalyses K(+)(out) + ATP + H2O = K(+)(in) + ADP + phosphate + H(+). Part of the high-affinity ATP-driven potassium transport (or Kdp) system, which catalyzes the hydrolysis of ATP coupled with the electrogenic transport of potassium into the cytoplasm. This subunit is responsible for energy coupling to the transport system and for the release of the potassium ions to the cytoplasm. This chain is Potassium-transporting ATPase ATP-binding subunit, found in Salmonella agona (strain SL483).